Reading from the N-terminus, the 465-residue chain is Light-independent protochlorophyllide reductase subunit N (465 aa).

The [4Fe-4S] cluster site is built by C23, C48, and C108.

It belongs to the BchN/ChlN family. In terms of assembly, protochlorophyllide reductase is composed of three subunits; ChlL, ChlN and ChlB. Forms a heterotetramer of two ChlB and two ChlN subunits. [4Fe-4S] cluster is required as a cofactor.

The catalysed reaction is chlorophyllide a + oxidized 2[4Fe-4S]-[ferredoxin] + 2 ADP + 2 phosphate = protochlorophyllide a + reduced 2[4Fe-4S]-[ferredoxin] + 2 ATP + 2 H2O. It participates in porphyrin-containing compound metabolism; chlorophyll biosynthesis (light-independent). In terms of biological role, component of the dark-operative protochlorophyllide reductase (DPOR) that uses Mg-ATP and reduced ferredoxin to reduce ring D of protochlorophyllide (Pchlide) to form chlorophyllide a (Chlide). This reaction is light-independent. The NB-protein (ChlN-ChlB) is the catalytic component of the complex. The protein is Light-independent protochlorophyllide reductase subunit N of Trichodesmium erythraeum (strain IMS101).